Here is a 190-residue protein sequence, read N- to C-terminus: Movement protein TGB3 (190 aa).

Topologically, residues 1 to 52 are cytoplasmic; that stretch reads MDPPVILHSPNCSCQFCSSELPSTHTCGSQDRTVPLHVEATAAGHMEAKNFS. A helical membrane pass occupies residues 53–73; it reads LQYVLLVAFVSVLLGFSFCVY. Over 74-166 the chain is Lumenal; sequence LKSMSNDEAS…TPCENNVLLK (93 aa). A phosphotyrosine mark is found at tyrosine 89 and tyrosine 120. The Involved in plasmodesmata targeting and virus cell-to-cell movement signature appears at 89 to 93; sequence YQDLN. A helical membrane pass occupies residues 167-187; it reads LWKDDLSFTIIAVTVLVGAML. The Cytoplasmic portion of the chain corresponds to 188–190; that stretch reads ARC.

The protein belongs to the virgaviridae TGB3 movement protein family. As to quaternary structure, interacts with movement protein TGB2. TGB1-TGB3-TGB2 complex formation is enhanced by ATP hydrolysis.

The protein localises to the host cell junction. It localises to the host plasmodesma. It is found in the host endoplasmic reticulum membrane. Its subcellular location is the host cytoplasm. The protein resides in the host cytoskeleton. Functionally, participates in the transport of viral genome to neighboring plant cells directly through plasmodesmata, without any budding. TGBp2 and TGBp3 are necessary for intracellular delivery of TGBp1-containing vRNPs to plasmodesmata. Can gate plasmodesmata and increase their size exclusion limit. Induces host actin cytoskeleton network thickening, which probably plays a major role in virus cell-to-cell movement. This is Movement protein TGB3 from Solanum nigrum (Black nightshade).